Reading from the N-terminus, the 211-residue chain is Potassium-transporting ATPase KdpC subunit (211 aa).

Residues 13–35 form a helical membrane-spanning segment; the sequence is VVTMVLTGLLYPLAVTGLAQLLF.

It belongs to the KdpC family. In terms of assembly, the system is composed of three essential subunits: KdpA, KdpB and KdpC.

The protein localises to the cell membrane. Part of the high-affinity ATP-driven potassium transport (or Kdp) system, which catalyzes the hydrolysis of ATP coupled with the electrogenic transport of potassium into the cytoplasm. This subunit acts as a catalytic chaperone that increases the ATP-binding affinity of the ATP-hydrolyzing subunit KdpB by the formation of a transient KdpB/KdpC/ATP ternary complex. This Myxococcus xanthus protein is Potassium-transporting ATPase KdpC subunit.